We begin with the raw amino-acid sequence, 475 residues long: Ribulose bisphosphate carboxylase large chain (475 aa).

The propeptide occupies 1 to 2; the sequence is MS. An N-acetylproline modification is found at Pro-3. Lys-14 carries the post-translational modification N6,N6,N6-trimethyllysine. Substrate-binding residues include Asn-123 and Thr-173. Lys-175 serves as the catalytic Proton acceptor. Lys-177 lines the substrate pocket. Residues Lys-201, Asp-203, and Glu-204 each coordinate Mg(2+). An N6-carboxylysine modification is found at Lys-201. The active-site Proton acceptor is the His-294. Substrate-binding residues include Arg-295, His-327, and Ser-379.

Belongs to the RuBisCO large chain family. Type I subfamily. In terms of assembly, heterohexadecamer of 8 large chains and 8 small chains; disulfide-linked. The disulfide link is formed within the large subunit homodimers. The cofactor is Mg(2+). Post-translationally, the disulfide bond which can form in the large chain dimeric partners within the hexadecamer appears to be associated with oxidative stress and protein turnover.

It localises to the plastid. The protein localises to the chloroplast. The enzyme catalyses 2 (2R)-3-phosphoglycerate + 2 H(+) = D-ribulose 1,5-bisphosphate + CO2 + H2O. It carries out the reaction D-ribulose 1,5-bisphosphate + O2 = 2-phosphoglycolate + (2R)-3-phosphoglycerate + 2 H(+). In terms of biological role, ruBisCO catalyzes two reactions: the carboxylation of D-ribulose 1,5-bisphosphate, the primary event in carbon dioxide fixation, as well as the oxidative fragmentation of the pentose substrate in the photorespiration process. Both reactions occur simultaneously and in competition at the same active site. The sequence is that of Ribulose bisphosphate carboxylase large chain from Chloranthus spicatus (Chulantree).